Consider the following 231-residue polypeptide: 2-C-methyl-D-erythritol 4-phosphate cytidylyltransferase (231 aa).

The protein belongs to the IspD/TarI cytidylyltransferase family. IspD subfamily.

The catalysed reaction is 2-C-methyl-D-erythritol 4-phosphate + CTP + H(+) = 4-CDP-2-C-methyl-D-erythritol + diphosphate. Its pathway is isoprenoid biosynthesis; isopentenyl diphosphate biosynthesis via DXP pathway; isopentenyl diphosphate from 1-deoxy-D-xylulose 5-phosphate: step 2/6. Catalyzes the formation of 4-diphosphocytidyl-2-C-methyl-D-erythritol from CTP and 2-C-methyl-D-erythritol 4-phosphate (MEP). This Clostridium novyi (strain NT) protein is 2-C-methyl-D-erythritol 4-phosphate cytidylyltransferase.